Consider the following 609-residue polypeptide: Phosphoenolpyruvate carboxykinase [GTP] (609 aa).

Substrate-binding positions include R81 and 220-222 (YGG). 2 residues coordinate Mn(2+): K229 and H249. Residue S271 coordinates substrate. A GTP-binding site is contributed by 272-277 (ACGKTN). C273 is an active-site residue. A Mn(2+)-binding site is contributed by D296. 387 to 389 (NSR) serves as a coordination point for substrate. GTP is bound by residues R389, R420, and 515–518 (FGEN).

This sequence belongs to the phosphoenolpyruvate carboxykinase [GTP] family. In terms of assembly, monomer. Requires Mn(2+) as cofactor.

The protein resides in the cytoplasm. The catalysed reaction is oxaloacetate + GTP = phosphoenolpyruvate + GDP + CO2. It functions in the pathway carbohydrate biosynthesis; gluconeogenesis. Catalyzes the conversion of oxaloacetate (OAA) to phosphoenolpyruvate (PEP), the rate-limiting step in the metabolic pathway that produces glucose from lactate and other precursors derived from the citric acid cycle. This chain is Phosphoenolpyruvate carboxykinase [GTP], found in Mycobacterium marinum (strain ATCC BAA-535 / M).